A 276-amino-acid chain; its full sequence is Phospholipid phosphatase 2 (276 aa).

Residues 1 to 4 (MERR) are Cytoplasmic-facing. The helical transmembrane segment at 5–25 (WVFVLLDVLCVLVASLPFIIL) threads the bilayer. At 26–51 (TLVNAPYKRGFYCGDDSIRYPYRPDT) the chain is on the lumenal side. A helical transmembrane segment spans residues 52 to 72 (ITHGLMAGVIITATVILVSLG). The Cytoplasmic portion of the chain corresponds to 73 to 87 (EAYLVYTDRLYSRSN). Residues 88 to 108 (FNNYVAAIYKVLGTFLFGAAV) traverse the membrane as a helical segment. Topologically, residues 109–161 (SQSLTDLAKYMIGRLRPSFLAVCDPDWSQVNCSGYVQLEVCRGSPANVTEARL) are lumenal. Residues 117 to 125 (KYMIGRLRP) are phosphatase sequence motif I. 2 N-linked (GlcNAc...) asparagine glycosylation sites follow: Asn-139 and Asn-155. The chain crosses the membrane as a helical span at residues 162–182 (SFYSGHSSFGMYCMLFLALYV). Residues 164–167 (YSGH) form a phosphatase sequence motif II region. His-167 functions as the Proton donors in the catalytic mechanism. The Cytoplasmic segment spans residues 183–189 (QARLCWK). The chain crosses the membrane as a helical span at residues 190-210 (WARLLRPTVQFFLVAFAIYVG). The Lumenal portion of the chain corresponds to 211–218 (YTRVSDHK). Residues 212 to 223 (TRVSDHKHHWSD) form a phosphatase sequence motif III region. The active-site Nucleophile is His-219. A helical membrane pass occupies residues 219 to 239 (HHWSDVLVGLLQGALVACLTV). Residues 240–276 (RYVSDFFKSRPPQPCQEDEVPERKPSLSLTLTLGDRP) are Cytoplasmic-facing. The segment at 251–276 (PQPCQEDEVPERKPSLSLTLTLGDRP) is disordered.

It belongs to the PA-phosphatase related phosphoesterase family. Forms functional homodimers and homooligomers. Can also form heterooligomers with PLPP1 and PLPP3. In terms of processing, N-glycosylated. Expressed at high levels in lung, liver and kidney; at low levels in heart and brain, and was not detected in skeletal muscle.

The protein localises to the membrane. It localises to the cell membrane. Its subcellular location is the early endosome membrane. The protein resides in the endoplasmic reticulum membrane. It carries out the reaction a 1,2-diacyl-sn-glycero-3-phosphate + H2O = a 1,2-diacyl-sn-glycerol + phosphate. The enzyme catalyses 1,2-dihexadecanoyl-sn-glycero-3-phosphate + H2O = 1,2-dihexadecanoyl-sn-glycerol + phosphate. It catalyses the reaction 1,2-di-(9Z-octadecenoyl)-sn-glycero-3-phosphate + H2O = 1,2-di-(9Z-octadecenoyl)-sn-glycerol + phosphate. The catalysed reaction is a monoacyl-sn-glycero-3-phosphate + H2O = a monoacylglycerol + phosphate. It carries out the reaction (9Z)-octadecenoyl-sn-glycero-3-phosphate + H2O = (9Z-octadecenoyl)-glycerol + phosphate. The enzyme catalyses sphing-4-enine 1-phosphate + H2O = sphing-4-enine + phosphate. It catalyses the reaction an N-acylsphing-4-enine 1-phosphate + H2O = an N-acylsphing-4-enine + phosphate. The catalysed reaction is N-(octanoyl)-sphing-4-enine-1-phosphate + H2O = N-octanoylsphing-4-enine + phosphate. It carries out the reaction N-(9Z-octadecenoyl)-ethanolamine phosphate + H2O = N-(9Z-octadecenoyl) ethanolamine + phosphate. The protein operates within lipid metabolism; phospholipid metabolism. With respect to regulation, magnesium-independent phospholipid phosphatase. Insensitive to N-ethylmaleimide. In terms of biological role, magnesium-independent phospholipid phosphatase that catalyzes the dephosphorylation of a variety of glycerolipid and sphingolipid phosphate esters including phosphatidate/PA, lysophosphatidate/LPA, sphingosine 1-phosphate/S1P and ceramide 1-phosphate/C1P. Has no apparent extracellular phosphatase activity and therefore most probably acts intracellularly. Also acts on N-oleoyl ethanolamine phosphate/N-(9Z-octadecenoyl)-ethanolamine phosphate, a potential physiological compound. Through dephosphorylation of these bioactive lipid mediators produces new bioactive compounds and may regulate signal transduction in different cellular processes. Indirectly regulates, for instance, cell cycle G1/S phase transition through its phospholipid phosphatase activity. The chain is Phospholipid phosphatase 2 from Mus musculus (Mouse).